The chain runs to 478 residues: Ubiquitin carboxyl-terminal hydrolase calypso (478 aa).

The UCH catalytic domain occupies 11 to 239 (GWLELESDPG…IRFNLMAVVP (229 aa)). The active-site Nucleophile is Cys97. His176 acts as the Proton donor in catalysis. The 29-residue stretch at 400–428 (NYDEFICTFLSMLAHQGELGDLVSQHLIT) folds into the ULD domain. Positions 430-478 (RKPNMGSVQNSGSRGVVRNYNKKTTTNGSSPKTPSSKRRRGRTKYRKRK) are positively charged C-terminal tail required for binding nucleosomes. Residues 432-442 (PNMGSVQNSGS) are compositionally biased toward polar residues. Residues 432 to 478 (PNMGSVQNSGSRGVVRNYNKKTTTNGSSPKTPSSKRRRGRTKYRKRK) form a disordered region. Over residues 464–478 (SSKRRRGRTKYRKRK) the composition is skewed to basic residues.

This sequence belongs to the peptidase C12 family. BAP1 subfamily. Catalytic component of the polycomb repressive deubiquitinase (PR-DUB) complex, at least composed of caly/calypso, Asx and sba (MBD5/6 homolog). The PR-DUB complex associates with nucleosomes to mediate deubiquitination of histone H2AK118ub1 substrates; the association requires the positively charged C-terminal tail of caly, probably due to direct binding of DNA. Interacts (via ULD domain) with Asx (via DEUBAD domain); the interaction produces a stable heterodimer with a composite binding site for ubiquitin. Homodimerizes (via coiled-coil hinge-region between the UCH and ULD domains) to mediate assembly of 2 copies of the caly-Asx heterodimer into a bisymmetric tetramer; dimerization enhances PR-DUB association with nucleosomes.

Its subcellular location is the nucleus. It carries out the reaction Thiol-dependent hydrolysis of ester, thioester, amide, peptide and isopeptide bonds formed by the C-terminal Gly of ubiquitin (a 76-residue protein attached to proteins as an intracellular targeting signal).. In terms of biological role, catalytic component of the polycomb repressive deubiquitinase (PR-DUB) complex, a complex that specifically mediates deubiquitination of histone H2A monoubiquitinated at 'Lys-119' (H2AK118ub1). Mediates bisymmetric organization of the PR-DUB complex and is involved in association with nucleosomes to mediate deubiquitination. Does not deubiquitinate monoubiquitinated histone H2B. Required to maintain the transcriptionally repressive state of homeotic genes throughout development. The PR-DUB complex has weak or no activity toward 'Lys-48'- and 'Lys-63'-linked polyubiquitin chains. Polycomb group (PcG) protein. This chain is Ubiquitin carboxyl-terminal hydrolase calypso, found in Aedes aegypti (Yellowfever mosquito).